The sequence spans 174 residues: Magnetosome protein MamT (174 aa).

Residues 1 to 9 are Cytoplasmic-facing; it reads MGTPGGGRR. A helical membrane pass occupies residues 10 to 28; it reads WMTLISITLLMVVGLGLYW. The Lumenal portion of the chain corresponds to 29-174; sequence DELSLSAGIS…EKKSGIKWLL (146 aa). Positions 87–107 match the MCR (magnetochrome) 1 motif; the sequence is VMPGTGMPHPYVGDCIQCHLM. The heme site is built by C101, C104, H105, C152, C155, and H156. The MCR 2 signature appears at 138–158; the sequence is ILPTTRQPHPPAGRCIKCHDI.

It belongs to the magnetosome MamT family. The cofactor is heme.

It is found in the magnetosome membrane. May play a role in magnetite crystal maturation. May transfer electrons to balance the Fe(2+)-Fe(3+) ratio during magnetite formation. In Magnetospirillum gryphiswaldense (strain DSM 6361 / JCM 21280 / NBRC 15271 / MSR-1), this protein is Magnetosome protein MamT.